A 2876-amino-acid polypeptide reads, in one-letter code: Nipped-B-like protein B (2876 aa).

Polar residues-rich tracts occupy residues 124 to 142 (PQNS…TTIT) and 149 to 167 (YVQT…QNSP). 4 disordered regions span residues 124–197 (PQNS…PIQQ), 246–367 (NDEG…SDAE), 439–494 (RESA…AGNK), and 525–1017 (EGPV…FPNY). Positions 276–290 (GPRPPLILQSPPPYT) are enriched in pro residues. The span at 439 to 457 (RESAIERERCSKEVQDKDK) shows a compositional bias: basic and acidic residues. Over residues 471 to 480 (PGAAGTAGAS) the composition is skewed to low complexity. Residues 481–490 (GTPGVGGGCN) show a composition bias toward gly residues. 3 stretches are compositionally biased toward basic and acidic residues: residues 556-577 (SKTD…KQRV), 586-955 (VDGR…EQRS), and 962-1005 (VKQE…HKPQ). The PxVxL motif motif lies at 1068–1081 (NKGAKPVVVLKKLS). Disordered regions lie at residues 1088–1229 (MISN…EPKL) and 1724–1747 (TEKA…KDVE). Residues 1090–1100 (SNSRSSKSSRS) show a composition bias toward low complexity. 2 stretches are compositionally biased toward basic and acidic residues: residues 1104-1119 (RFRE…ERVK) and 1156-1183 (KDRD…DSRR). The segment covering 1212-1223 (KLKKKEKQKKRK) has biased composition (basic residues). 5 HEAT repeats span residues 1803–1841 (AQSF…VDPS), 1879–1917 (PQLT…EQPT), 1981–2020 (YDWF…HILK), 2203–2241 (VVIK…QDPG), and 2349–2387 (LIHP…KYTG). Disordered regions lie at residues 2516 to 2590 (EVVK…DSDL) and 2728 to 2774 (ALLG…GHRN). Positions 2519–2537 (KKKKKKKKKKKQKQKRGKK) are enriched in basic residues. The span at 2548 to 2563 (RSSSSSSSSSSSSSDS) shows a compositional bias: low complexity. Basic and acidic residues predominate over residues 2762–2774 (RTGDSAEASGHRN).

This sequence belongs to the SCC2/Nipped-B family.

The protein resides in the nucleus. Its function is as follows. May play a structural role in chromatin. Involved in sister chromatid cohesion, possibly by facilitating the cohesin complex loading. Transcription factor, which may promote cortical neuron migration during brain development by regulating the transcription of crucial genes in this process. In Danio rerio (Zebrafish), this protein is Nipped-B-like protein B (nipblb).